A 279-amino-acid polypeptide reads, in one-letter code: Threonylcarbamoyl-AMP synthase (279 aa).

A mitochondrion-targeting transit peptide spans 1 to 55 (MSPARRCRGMRAAVAASVGLSEGPAGSRSGRLFRPPSPAPAAPGARLLRLPGSGA). The tract at residues 21–41 (SEGPAGSRSGRLFRPPSPAPA) is disordered. The residue at position 60 (S60) is a Phosphoserine. Residues 67 to 257 (TEALRAAVAE…KFGIIRPGCA (191 aa)) enclose the YrdC-like domain.

The protein belongs to the SUA5 family. In terms of assembly, interacts with RSC1A1. As to expression, ubiquitously expressed.

The protein resides in the cytoplasm. It localises to the mitochondrion. It is found in the cell membrane. The enzyme catalyses L-threonine + hydrogencarbonate + ATP = L-threonylcarbamoyladenylate + diphosphate + H2O. Cytoplasmic and mitochondrial threonylcarbamoyl-AMP synthase required for the formation of a threonylcarbamoyl group on adenosine at position 37 (t(6)A37) in tRNAs that read codons beginning with adenine. Catalyzes the conversion of L-threonine, HCO(3)(-)/CO(2) and ATP to give threonylcarbamoyl-AMP (TC-AMP) as the acyladenylate intermediate, with the release of diphosphate. Participates in t(6)A37 formation in cytoplasmic and mitochondrial tRNAs. May regulate the activity of some transporters. This is Threonylcarbamoyl-AMP synthase from Homo sapiens (Human).